The primary structure comprises 169 residues: Putative phosphoesterase SACOL1020 (169 aa).

His34 serves as the catalytic Proton donor. 2 short sequence motifs (HXTX) span residues 34-37 (HVTI) and 115-118 (HFTI). Residue His115 is the Proton acceptor of the active site.

This sequence belongs to the 2H phosphoesterase superfamily. YjcG family.

This Staphylococcus aureus (strain COL) protein is Putative phosphoesterase SACOL1020.